The chain runs to 630 residues: Probable potassium transport system protein Kup 1 (630 aa).

The next 12 membrane-spanning stretches (helical) occupy residues 15–35 (FAAL…TSPL), 59–79 (LSLI…TFIM), 109–129 (WIMI…MVTP), 145–165 (PALK…LFFV), 173–193 (VGAF…LLGV), 223–243 (LVAM…YADM), 255–275 (WFAF…ALIL), 297–317 (LVGL…SGAF), 345–365 (IYLP…VLGF), 374–394 (AYGI…TVVV), 405–425 (AGLL…ANIL), and 427–447 (IPDG…LMTT).

Belongs to the HAK/KUP transporter (TC 2.A.72) family.

The protein localises to the cell inner membrane. The enzyme catalyses K(+)(in) + H(+)(in) = K(+)(out) + H(+)(out). Its function is as follows. Transport of potassium into the cell. Likely operates as a K(+):H(+) symporter. The polypeptide is Probable potassium transport system protein Kup 1 (Dechloromonas aromatica (strain RCB)).